The chain runs to 207 residues: Neuroendocrine protein 7B2 (207 aa).

The signal sequence occupies residues 1-22; that stretch reads MVSTMLSGLVLWLTFGWTPALA. A disulfide bridge connects residues cysteine 116 and cysteine 125. Residues serine 136 and serine 200 each carry the phosphoserine modification. Residues 168 to 207 are disordered; that stretch reads KGGQRRKRRSVNPYLQGQRLDNVVAKKSVPHFSDEDKDPE.

This sequence belongs to the 7B2 family. As to quaternary structure, interacts with PCSK2/PC2 early in the secretory pathway. Dissociation occurs at later stages. In terms of processing, proteolytically cleaved in the Golgi by a furin-like convertase to generate bioactive peptides. Sulfated on tyrosine residues.

It is found in the secreted. Functionally, acts as a molecular chaperone for PCSK2/PC2, preventing its premature activation in the regulated secretory pathway. Binds to inactive PCSK2 in the endoplasmic reticulum and facilitates its transport from there to later compartments of the secretory pathway where it is proteolytically matured and activated. Also required for cleavage of PCSK2 but does not appear to be involved in its folding. Plays a role in regulating pituitary hormone secretion. The C-terminal peptide inhibits PCSK2 in vitro. This is Neuroendocrine protein 7B2 (SCG5) from Sus scrofa (Pig).